A 261-amino-acid chain; its full sequence is Hydroxyethylthiazole kinase (261 aa).

Met-40 contacts substrate. 2 residues coordinate ATP: Lys-116 and Thr-162. Gly-189 is a binding site for substrate.

This sequence belongs to the Thz kinase family. Requires Mg(2+) as cofactor.

It catalyses the reaction 5-(2-hydroxyethyl)-4-methylthiazole + ATP = 4-methyl-5-(2-phosphooxyethyl)-thiazole + ADP + H(+). It functions in the pathway cofactor biosynthesis; thiamine diphosphate biosynthesis; 4-methyl-5-(2-phosphoethyl)-thiazole from 5-(2-hydroxyethyl)-4-methylthiazole: step 1/1. Functionally, catalyzes the phosphorylation of the hydroxyl group of 4-methyl-5-beta-hydroxyethylthiazole (THZ). In Methanosarcina acetivorans (strain ATCC 35395 / DSM 2834 / JCM 12185 / C2A), this protein is Hydroxyethylthiazole kinase.